Reading from the N-terminus, the 117-residue chain is Large ribosomal subunit protein bL20 (117 aa).

Belongs to the bacterial ribosomal protein bL20 family.

Its function is as follows. Binds directly to 23S ribosomal RNA and is necessary for the in vitro assembly process of the 50S ribosomal subunit. It is not involved in the protein synthesizing functions of that subunit. This chain is Large ribosomal subunit protein bL20, found in Chromohalobacter salexigens (strain ATCC BAA-138 / DSM 3043 / CIP 106854 / NCIMB 13768 / 1H11).